We begin with the raw amino-acid sequence, 301 residues long: Methionyl-tRNA formyltransferase (301 aa).

110–113 (SLLP) is a (6S)-5,6,7,8-tetrahydrofolate binding site.

It belongs to the Fmt family.

It carries out the reaction L-methionyl-tRNA(fMet) + (6R)-10-formyltetrahydrofolate = N-formyl-L-methionyl-tRNA(fMet) + (6S)-5,6,7,8-tetrahydrofolate + H(+). Its function is as follows. Attaches a formyl group to the free amino group of methionyl-tRNA(fMet). The formyl group appears to play a dual role in the initiator identity of N-formylmethionyl-tRNA by promoting its recognition by IF2 and preventing the misappropriation of this tRNA by the elongation apparatus. This is Methionyl-tRNA formyltransferase from Acidiphilium cryptum (strain JF-5).